A 397-amino-acid chain; its full sequence is CCA-adding enzyme (397 aa).

Residues glycine 32 and arginine 35 each contribute to the ATP site. CTP is bound by residues glycine 32 and arginine 35. Aspartate 45 and aspartate 47 together coordinate Mg(2+). Residues arginine 116, aspartate 159, arginine 162, arginine 165, and arginine 168 each coordinate ATP. CTP-binding residues include arginine 116, aspartate 159, arginine 162, arginine 165, and arginine 168.

This sequence belongs to the tRNA nucleotidyltransferase/poly(A) polymerase family. Bacterial CCA-adding enzyme type 3 subfamily. In terms of assembly, homodimer. The cofactor is Mg(2+).

The catalysed reaction is a tRNA precursor + 2 CTP + ATP = a tRNA with a 3' CCA end + 3 diphosphate. The enzyme catalyses a tRNA with a 3' CCA end + 2 CTP + ATP = a tRNA with a 3' CCACCA end + 3 diphosphate. Its function is as follows. Catalyzes the addition and repair of the essential 3'-terminal CCA sequence in tRNAs without using a nucleic acid template. Adds these three nucleotides in the order of C, C, and A to the tRNA nucleotide-73, using CTP and ATP as substrates and producing inorganic pyrophosphate. tRNA 3'-terminal CCA addition is required both for tRNA processing and repair. Also involved in tRNA surveillance by mediating tandem CCA addition to generate a CCACCA at the 3' terminus of unstable tRNAs. While stable tRNAs receive only 3'-terminal CCA, unstable tRNAs are marked with CCACCA and rapidly degraded. The chain is CCA-adding enzyme from Levilactobacillus brevis (strain ATCC 367 / BCRC 12310 / CIP 105137 / JCM 1170 / LMG 11437 / NCIMB 947 / NCTC 947) (Lactobacillus brevis).